The sequence spans 227 residues: Probable GTP-binding protein EngB (227 aa).

The EngB-type G domain maps to 30 to 219 (KKPQIIVVGR…MVKINKNVNE (190 aa)). GTP is bound by residues 38 to 45 (GRSNVGKS), 63 to 67 (GVTLK), 80 to 83 (DLPG), 160 to 163 (NKMD), and 197 to 199 (IGI). Residues Ser-45 and Thr-65 each coordinate Mg(2+).

It belongs to the TRAFAC class TrmE-Era-EngA-EngB-Septin-like GTPase superfamily. EngB GTPase family. The cofactor is Mg(2+).

Its function is as follows. Necessary for normal cell division and for the maintenance of normal septation. This Methanococcus aeolicus (strain ATCC BAA-1280 / DSM 17508 / OCM 812 / Nankai-3) protein is Probable GTP-binding protein EngB.